The following is a 212-amino-acid chain: Thymidylate kinase (212 aa).

Residue 10-17 participates in ATP binding; that stretch reads GPDGAGKS.

It belongs to the thymidylate kinase family.

It catalyses the reaction dTMP + ATP = dTDP + ADP. In terms of biological role, phosphorylation of dTMP to form dTDP in both de novo and salvage pathways of dTTP synthesis. The sequence is that of Thymidylate kinase from Lactobacillus helveticus (strain DPC 4571).